Here is a 160-residue protein sequence, read N- to C-terminus: Cytochrome b6-f complex subunit 4 (160 aa).

3 consecutive transmembrane segments (helical) span residues 36 to 56, 95 to 115, and 131 to 151; these read LLYI…GLAI, LLGV…PFLE, and TVFL…TLPI.

This sequence belongs to the cytochrome b family. PetD subfamily. As to quaternary structure, the 4 large subunits of the cytochrome b6-f complex are cytochrome b6, subunit IV (17 kDa polypeptide, petD), cytochrome f and the Rieske protein, while the 4 small subunits are petG, petL, petM and petN. The complex functions as a dimer.

It is found in the plastid. It localises to the chloroplast thylakoid membrane. Its function is as follows. Component of the cytochrome b6-f complex, which mediates electron transfer between photosystem II (PSII) and photosystem I (PSI), cyclic electron flow around PSI, and state transitions. The protein is Cytochrome b6-f complex subunit 4 of Oenothera elata subsp. hookeri (Hooker's evening primrose).